The chain runs to 943 residues: UvrABC system protein A (943 aa).

Gly31–Ser38 serves as a coordination point for ATP. Residues Cys253–Cys280 form a C4-type zinc finger. ABC transporter domains follow at residues Trp310 to Ile587 and Leu607 to Lys937. Gly640–Ser647 serves as a coordination point for ATP. Residues Cys740–Cys766 form a C4-type zinc finger.

The protein belongs to the ABC transporter superfamily. UvrA family. Forms a heterotetramer with UvrB during the search for lesions.

It is found in the cytoplasm. Its function is as follows. The UvrABC repair system catalyzes the recognition and processing of DNA lesions. UvrA is an ATPase and a DNA-binding protein. A damage recognition complex composed of 2 UvrA and 2 UvrB subunits scans DNA for abnormalities. When the presence of a lesion has been verified by UvrB, the UvrA molecules dissociate. This Haemophilus influenzae (strain ATCC 51907 / DSM 11121 / KW20 / Rd) protein is UvrABC system protein A.